A 318-amino-acid chain; its full sequence is tRNA U34 carboxymethyltransferase (318 aa).

Carboxy-S-adenosyl-L-methionine is bound by residues K88, W102, K107, G126, 176–177 (LE), M192, Y196, and R311.

This sequence belongs to the class I-like SAM-binding methyltransferase superfamily. CmoB family. In terms of assembly, homotetramer.

The catalysed reaction is carboxy-S-adenosyl-L-methionine + 5-hydroxyuridine(34) in tRNA = 5-carboxymethoxyuridine(34) in tRNA + S-adenosyl-L-homocysteine + H(+). Catalyzes carboxymethyl transfer from carboxy-S-adenosyl-L-methionine (Cx-SAM) to 5-hydroxyuridine (ho5U) to form 5-carboxymethoxyuridine (cmo5U) at position 34 in tRNAs. The protein is tRNA U34 carboxymethyltransferase of Pseudomonas putida (strain W619).